Consider the following 42-residue polypeptide: uncharacterized protein (42 aa).

This is an uncharacterized protein from Saccharomyces cerevisiae (strain ATCC 204508 / S288c) (Baker's yeast).